Reading from the N-terminus, the 188-residue chain is Protein-export protein SecB (188 aa).

2 disordered regions span residues M1 to K21 and R160 to Q188. Positions S176–Q188 are enriched in polar residues.

Belongs to the SecB family. In terms of assembly, homotetramer, a dimer of dimers. One homotetramer interacts with 1 SecA dimer.

It is found in the cytoplasm. Its function is as follows. One of the proteins required for the normal export of preproteins out of the cell cytoplasm. It is a molecular chaperone that binds to a subset of precursor proteins, maintaining them in a translocation-competent state. It also specifically binds to its receptor SecA. The protein is Protein-export protein SecB of Alkalilimnicola ehrlichii (strain ATCC BAA-1101 / DSM 17681 / MLHE-1).